Reading from the N-terminus, the 309-residue chain is MNKVALPPTQPLPDAQAWQGAMSDVGLDWVGMQGIALPLELAGKPLMAKVNAGINLRASRHGARGIHMSRLYLTLDELTQGELTPQRIADSLRAFLASQPEHSDSASLSISGELMLSRPALLSAHRGWKAYPLKIDASLTTGLTLSLTVGVPYSSTCPSSAALSRQLAQQQFQFDFEQAPDKVSQQQVIDWLGEQGMPGTPHSQRSWAWVTVTLNEGEAELPVVNLIDRIEHALGTPLQTLVKRQDEQAFALANGQNLMFCEDAARRLYRMLRSQCHHRAFSLRVEHQESLHAHNAVAELSWQEAGNAA.

It belongs to the GTP cyclohydrolase IV family.

The catalysed reaction is GTP + H2O = 7,8-dihydroneopterin 3'-triphosphate + formate + H(+). It participates in cofactor biosynthesis; 7,8-dihydroneopterin triphosphate biosynthesis; 7,8-dihydroneopterin triphosphate from GTP: step 1/1. In terms of biological role, converts GTP to 7,8-dihydroneopterin triphosphate. This Serratia proteamaculans (strain 568) protein is GTP cyclohydrolase FolE2.